Consider the following 356-residue polypeptide: Phosphoserine aminotransferase (356 aa).

Arg41 provides a ligand contact to L-glutamate. Residues 75-76, Trp100, Thr147, Asp166, and Gln189 each bind pyridoxal 5'-phosphate; that span reads AT. Lys190 carries the post-translational modification N6-(pyridoxal phosphate)lysine. Pyridoxal 5'-phosphate is bound at residue 227 to 228; the sequence is NT.

This sequence belongs to the class-V pyridoxal-phosphate-dependent aminotransferase family. SerC subfamily. In terms of assembly, homodimer. Requires pyridoxal 5'-phosphate as cofactor.

The protein resides in the cytoplasm. The catalysed reaction is O-phospho-L-serine + 2-oxoglutarate = 3-phosphooxypyruvate + L-glutamate. It carries out the reaction 4-(phosphooxy)-L-threonine + 2-oxoglutarate = (R)-3-hydroxy-2-oxo-4-phosphooxybutanoate + L-glutamate. Its pathway is amino-acid biosynthesis; L-serine biosynthesis; L-serine from 3-phospho-D-glycerate: step 2/3. Functionally, catalyzes the reversible conversion of 3-phosphohydroxypyruvate to phosphoserine and of 3-hydroxy-2-oxo-4-phosphonooxybutanoate to phosphohydroxythreonine. The polypeptide is Phosphoserine aminotransferase (Exiguobacterium sp. (strain ATCC BAA-1283 / AT1b)).